Reading from the N-terminus, the 406-residue chain is MSRLLFVALLAISLGYVASSSSNHLPAGLAMDLGPGVNLNERFFDQVRALIKRRLQEKGLAKPEQPELAMPLTDDDAVALQNQRSYDNVPLPAASVPTPVLVENWPTEQHSFGQVTAVAVDPQGSPVVFHRAERYWDVNTFNESNIYYLIEYGPIKENTIYVLDAKTGAIKSGWGSNMFYMPHGLTIDLHGNYWITDVAMHQAFKFKPFSNKPLLTIGKRFRPGSSVKHLCKPTSIAVATTGEFFIADGYCNSRILKFNAAGKLLRTIPQPPEFLSLQVPHAITLLEHLDLLCIADRENMRVVCPKAGLISSHGEGEPAATIQEPDLGRVFGVASFGDIVFAVNGPTSMLPVRGFTIDPRSETIIGHWGEFKNPHSMAVSVNGSALYVTEIGTNHQTNRVWKYVLA.

An N-terminal signal peptide occupies residues 1–19; sequence MSRLLFVALLAISLGYVAS. NHL repeat units follow at residues 168–209, 218–261, 264–308, and 358–402; these read GAIK…FKPF, GKRF…FNAA, LLRT…PKAG, and DPRS…RVWK. Intrachain disulfides connect C231–C251 and C293–C304.

It belongs to the peptidyl-alpha-hydroxyglycine alpha-amidating lyase family. Zn(2+) is required as a cofactor. Post-translationally, N-glycosylated. Only found in a subset of neurons distributed throughout all levels of the central nervous system (CNS). Present in at least some neuroendocrine cells. In adult brains, it is only present in a small handful of cells, the majority of which being distributed in distal parts of the medulla, with a higher expression in the posterior surface of the brain (at protein level).

The protein localises to the secreted. It carries out the reaction a [peptide]-C-terminal (2S)-2-hydroxyglycine = a [peptide]-C-terminal amide + glyoxylate. Peptidyl-alpha-hydroxylglycine alpha-amidating lyase that catalyzes an essential reaction in C-terminal alpha-amidation of peptides. Mediates the dismutation of the unstable peptidyl(2-hydroxyglycine) intermediate to glyoxylate and the corresponding desglycine peptide amide. C-terminal amidation of peptides such as neuropeptides is essential for full biological activity. The chain is Peptidyl-alpha-hydroxyglycine alpha-amidating lyase 2 (Pal2) from Drosophila melanogaster (Fruit fly).